The chain runs to 169 residues: Large ribosomal subunit protein uL5 (169 aa).

Belongs to the universal ribosomal protein uL5 family. In terms of assembly, part of the 50S ribosomal subunit; contacts the 5S rRNA and probably tRNA. Forms a bridge to the 30S subunit in the 70S ribosome.

Functionally, this is one of the proteins that bind and probably mediate the attachment of the 5S RNA into the large ribosomal subunit, where it forms part of the central protuberance. In the 70S ribosome it contacts protein S13 of the 30S subunit (bridge B1b), connecting the 2 subunits; this bridge is implicated in subunit movement. May contact the P site tRNA; the 5S rRNA and some of its associated proteins might help stabilize positioning of ribosome-bound tRNAs. The protein is Large ribosomal subunit protein uL5 of Cenarchaeum symbiosum (strain A).